The chain runs to 689 residues: Elongation factor G (689 aa).

One can recognise a tr-type G domain in the interval 8-282; it reads DKVRNIGIMA…AIVRYLPSPL (275 aa). Residues 17–24, 81–85, and 135–138 contribute to the GTP site; these read AHIDAGKT, DTPGH, and NKMD.

Belongs to the TRAFAC class translation factor GTPase superfamily. Classic translation factor GTPase family. EF-G/EF-2 subfamily.

It is found in the cytoplasm. Catalyzes the GTP-dependent ribosomal translocation step during translation elongation. During this step, the ribosome changes from the pre-translocational (PRE) to the post-translocational (POST) state as the newly formed A-site-bound peptidyl-tRNA and P-site-bound deacylated tRNA move to the P and E sites, respectively. Catalyzes the coordinated movement of the two tRNA molecules, the mRNA and conformational changes in the ribosome. The chain is Elongation factor G from Thermoanaerobacter pseudethanolicus (strain ATCC 33223 / 39E) (Clostridium thermohydrosulfuricum).